Reading from the N-terminus, the 144-residue chain is Large ribosomal subunit protein uL13 (144 aa).

It belongs to the universal ribosomal protein uL13 family. Part of the 50S ribosomal subunit.

In terms of biological role, this protein is one of the early assembly proteins of the 50S ribosomal subunit, although it is not seen to bind rRNA by itself. It is important during the early stages of 50S assembly. The sequence is that of Large ribosomal subunit protein uL13 from Mesomycoplasma hyopneumoniae (strain 7448) (Mycoplasma hyopneumoniae).